The following is a 233-amino-acid chain: uncharacterized protein (233 aa).

A disordered region spans residues 21–43; it reads RWRTATSADHPRRGRPAAQAVRR.

This is an uncharacterized protein from Mycobacterium tuberculosis (strain CDC 1551 / Oshkosh).